A 126-amino-acid chain; its full sequence is Aspartate 1-decarboxylase (126 aa).

Ser-25 serves as the catalytic Schiff-base intermediate with substrate; via pyruvic acid. Pyruvic acid (Ser) is present on Ser-25. Thr-57 is a binding site for substrate. The active-site Proton donor is Tyr-58. 73 to 75 contributes to the substrate binding site; sequence GAA.

Belongs to the PanD family. Heterooctamer of four alpha and four beta subunits. The cofactor is pyruvate. In terms of processing, is synthesized initially as an inactive proenzyme, which is activated by self-cleavage at a specific serine bond to produce a beta-subunit with a hydroxyl group at its C-terminus and an alpha-subunit with a pyruvoyl group at its N-terminus.

It localises to the cytoplasm. It carries out the reaction L-aspartate + H(+) = beta-alanine + CO2. Its pathway is cofactor biosynthesis; (R)-pantothenate biosynthesis; beta-alanine from L-aspartate: step 1/1. Catalyzes the pyruvoyl-dependent decarboxylation of aspartate to produce beta-alanine. The chain is Aspartate 1-decarboxylase from Halorhodospira halophila (strain DSM 244 / SL1) (Ectothiorhodospira halophila (strain DSM 244 / SL1)).